Reading from the N-terminus, the 366-residue chain is Glutamate 5-kinase (366 aa).

Lys-17 serves as a coordination point for ATP. The substrate site is built by Ser-57, Asp-144, and Asn-156. Residues 176 to 177 and 216 to 222 contribute to the ATP site; these read SD and TGGMASK. One can recognise a PUA domain in the interval 278–352; it reads QGILHIDEGA…GKSTQELPAE (75 aa).

The protein belongs to the glutamate 5-kinase family.

The protein localises to the cytoplasm. It catalyses the reaction L-glutamate + ATP = L-glutamyl 5-phosphate + ADP. The protein operates within amino-acid biosynthesis; L-proline biosynthesis; L-glutamate 5-semialdehyde from L-glutamate: step 1/2. Catalyzes the transfer of a phosphate group to glutamate to form L-glutamate 5-phosphate. The protein is Glutamate 5-kinase of Rhodococcus opacus (strain B4).